Here is a 585-residue protein sequence, read N- to C-terminus: Putative sulfur deprivation response regulator (585 aa).

The next 5 helical transmembrane spans lie at 5 to 25 (VVDADVCLFAASTLLLLRGII), 30 to 50 (AFAGLANDSIVSIALMMMIAA), 83 to 103 (VASVSAVMNNTPLVAVMIPVV), 117 to 137 (FMMPLSYSAILGGLCTIIGTS), and 162 to 182 (IIGLPLTVAGGIYVVLFSPLL). 2 consecutive RCK C-terminal domains span residues 189–274 (MMAA…LPGL) and 288–372 (ETVA…STEW). Transmembrane regions (helical) follow at residues 389–409 (LALFMSLGIFIALIVLNSMDV), 411–431 (PLSTTALVCLFAYLITGVLTV), 442–462 (ILLTVAGGFGVAKAMTVTGLA), 482–502 (VAAIYASTSLLTALLSNGAAV), and 561–581 (FGLPLQFVAALITVPICVLYF).

This sequence belongs to the CitM (TC 2.A.11) transporter family.

It localises to the membrane. Its function is as follows. Not known; mutations in SAC1 produces cells that cannot synthesize arylsulfatase and cannot take up sulfate as rapidly as wild-type cells. SAC1 is necessary for cells to survive sulfur deprivation. The protein is Putative sulfur deprivation response regulator (SAC1) of Chlamydomonas reinhardtii (Chlamydomonas smithii).